The primary structure comprises 333 residues: L-lactate dehydrogenase A chain (333 aa).

NAD(+) is bound by residues 30-58 (GAVG…IEDK) and Arg100. Residues Arg107, Asn139, and Arg170 each coordinate substrate. Position 139 (Asn139) interacts with NAD(+). His194 serves as the catalytic Proton acceptor. A substrate-binding site is contributed by Thr249.

This sequence belongs to the LDH/MDH superfamily. LDH family. As to quaternary structure, homotetramer.

The protein resides in the cytoplasm. It carries out the reaction (S)-lactate + NAD(+) = pyruvate + NADH + H(+). Its pathway is fermentation; pyruvate fermentation to lactate; (S)-lactate from pyruvate: step 1/1. In terms of biological role, interconverts simultaneously and stereospecifically pyruvate and lactate with concomitant interconversion of NADH and NAD(+). This is L-lactate dehydrogenase A chain (LDHA) from Ambystoma mexicanum (Axolotl).